The sequence spans 331 residues: tRNA N6-adenosine threonylcarbamoyltransferase (331 aa).

Residues H107 and H111 each coordinate Fe cation. Substrate contacts are provided by residues 129-133 (LVSGG), D162, G175, and N269. D297 contributes to the Fe cation binding site.

Belongs to the KAE1 / TsaD family. Fe(2+) serves as cofactor.

The protein localises to the cytoplasm. It carries out the reaction L-threonylcarbamoyladenylate + adenosine(37) in tRNA = N(6)-L-threonylcarbamoyladenosine(37) in tRNA + AMP + H(+). Its function is as follows. Required for the formation of a threonylcarbamoyl group on adenosine at position 37 (t(6)A37) in tRNAs that read codons beginning with adenine. Is involved in the transfer of the threonylcarbamoyl moiety of threonylcarbamoyl-AMP (TC-AMP) to the N6 group of A37, together with TsaE and TsaB. TsaD likely plays a direct catalytic role in this reaction. The protein is tRNA N6-adenosine threonylcarbamoyltransferase of Wolinella succinogenes (strain ATCC 29543 / DSM 1740 / CCUG 13145 / JCM 31913 / LMG 7466 / NCTC 11488 / FDC 602W) (Vibrio succinogenes).